We begin with the raw amino-acid sequence, 302 residues long: Protoheme IX farnesyltransferase 1 (302 aa).

Helical transmembrane passes span 30-50, 52-72, 102-122, 124-144, 152-172, 178-198, 224-244, 245-265, and 282-302; these read VVALMLLTVLVGMCLALPGAV, LQPLIFGLLGIGMMAGAAAAF, ALTFSISLAVLGFVLLYTLVN, LTAWLTFASLLGYAVVYTAYL, IVVGGLAGAMPPLLGWTSVTG, ALLLVIIIFAWTPPHFWALAI, CILLYTILLAIACLLPVLVGM, CGPLYLVGSTLLSCGFIYKSW, and FSIYHLMLLFIVLLVDHYLWV.

It belongs to the UbiA prenyltransferase family. Protoheme IX farnesyltransferase subfamily.

Its subcellular location is the cell inner membrane. It carries out the reaction heme b + (2E,6E)-farnesyl diphosphate + H2O = Fe(II)-heme o + diphosphate. It functions in the pathway porphyrin-containing compound metabolism; heme O biosynthesis; heme O from protoheme: step 1/1. Functionally, converts heme B (protoheme IX) to heme O by substitution of the vinyl group on carbon 2 of heme B porphyrin ring with a hydroxyethyl farnesyl side group. The polypeptide is Protoheme IX farnesyltransferase 1 (Shewanella woodyi (strain ATCC 51908 / MS32)).